The sequence spans 1147 residues: Protein lin-41 (1147 aa).

The segment at 1–93 (MATIVPCSLE…PPSMIQSPQQ (93 aa)) is disordered. Positions 33-47 (SGNELSMGGSSSEGD) are enriched in low complexity. Over residues 48–65 (SMSHHRGEHSPNHHHQDN) the composition is skewed to basic and acidic residues. The span at 84–93 (PPSMIQSPQQ) shows a compositional bias: low complexity. An RING-type zinc finger spans residues 114–155 (CSVCSKSSTIGVLPFVCAHKTCQSCYQMTPSSYDRRACKLCG). The segment at 366–412 (MGPIQCQGCESKISFAYCMQCQEALCIHCVQAHQRVRATKQHAFVEL) adopts a B box-type; atypical zinc-finger fold. Zn(2+) contacts are provided by cysteine 371, cysteine 374, cysteine 394, and histidine 398. Residues 565 to 618 (AFDTHVNALEERRKELLKRVETVKNLKLSVLISQAESLQSKQIDLQQAIQTATK) are a coiled coil. One copy of the Filamin repeat lies at 723–817 (ACGDLLSSSI…ISGCPTTMDI (95 aa)). NHL repeat units lie at residues 832 to 875 (ILTF…FDKD), 879 to 922 (ISKF…FDEN), 926 to 969 (LLKF…FTPQ), 974 to 1017 (RKCG…LSPR), 1022 to 1065 (MKVY…FASD), and 1107 to 1147 (SAPT…IRVF). The interval 1104 to 1123 (AFSSAPTPLTPSPRQLLDRP) is disordered.

This sequence belongs to the TRIM/RBCC family.

It localises to the cytoplasm. The protein localises to the P-body. Functionally, heterochronic protein which acts downstream of let-7 in temporal patterning. Plays a role in the developmental timing of postembryonic hypodermal seam cell division and fusion events and adult alae production. Represses lin-29 during late larval stages, which prevents terminal differentiation of hypodermal seam cells and promotes their division. Involved in post-transcriptional gene regulation, uses two independent pathways. Has direct and specific RNA-binding activity and, depending on the location (5'UTR or 3'UTR) of the target site, triggers either mRNA decay or repression of translation. Degrades the mRNA of transcription factor dmd-3 to govern the timing and extent of male tail tip morphogenesis. Plays a role in the sexual maturation of the nervous system. This chain is Protein lin-41, found in Caenorhabditis elegans.